Reading from the N-terminus, the 43-residue chain is MILLKVNHKPFMLPCVVIASLAYSEQVGWNRQLLPSSGEIKYL.

This is an uncharacterized protein from Rickettsia prowazekii (strain Madrid E).